We begin with the raw amino-acid sequence, 1191 residues long: DNA-directed RNA polymerase subunit beta (1191 aa).

Positions E1164 to E1191 are disordered. The segment covering D1181 to E1191 has biased composition (acidic residues).

Belongs to the RNA polymerase beta chain family. As to quaternary structure, the RNAP catalytic core consists of 2 alpha, 1 beta, 1 beta' and 1 omega subunit. When a sigma factor is associated with the core the holoenzyme is formed, which can initiate transcription.

The catalysed reaction is RNA(n) + a ribonucleoside 5'-triphosphate = RNA(n+1) + diphosphate. In terms of biological role, DNA-dependent RNA polymerase catalyzes the transcription of DNA into RNA using the four ribonucleoside triphosphates as substrates. The polypeptide is DNA-directed RNA polymerase subunit beta (Lysinibacillus sphaericus (strain C3-41)).